The primary structure comprises 459 residues: DNA polymerase subunit gamma-2 (459 aa).

In terms of assembly, heterotrimer composed of a catalytic subunit and a homodimer of accessory subunits (POLG:POLG2).

The protein localises to the mitochondrion. Its subcellular location is the mitochondrion matrix. The protein resides in the mitochondrion nucleoid. Its function is as follows. Accessory subunit of DNA polymerase gamma solely responsible for replication of mitochondrial DNA (mtDNA). Acts as an allosteric regulator of the holoenzyme activities. Enhances the polymerase activity and the processivity of POLG by increasing its interactions with the DNA template. Suppresses POLG exonucleolytic proofreading especially toward homopolymeric templates bearing mismatched termini. Binds to single-stranded DNA. In Mus musculus (Mouse), this protein is DNA polymerase subunit gamma-2 (Polg2).